The sequence spans 220 residues: Ribosomal RNA large subunit methyltransferase E (220 aa).

Gly-60, Trp-62, Asp-92, Asp-108, and Asp-133 together coordinate S-adenosyl-L-methionine. Lys-173 functions as the Proton acceptor in the catalytic mechanism.

It belongs to the class I-like SAM-binding methyltransferase superfamily. RNA methyltransferase RlmE family.

Its subcellular location is the cytoplasm. It catalyses the reaction uridine(2552) in 23S rRNA + S-adenosyl-L-methionine = 2'-O-methyluridine(2552) in 23S rRNA + S-adenosyl-L-homocysteine + H(+). Functionally, specifically methylates the uridine in position 2552 of 23S rRNA at the 2'-O position of the ribose in the fully assembled 50S ribosomal subunit. The chain is Ribosomal RNA large subunit methyltransferase E from Paraburkholderia phymatum (strain DSM 17167 / CIP 108236 / LMG 21445 / STM815) (Burkholderia phymatum).